A 374-amino-acid chain; its full sequence is Queuine tRNA-ribosyltransferase (374 aa).

Asp-89 (proton acceptor) is an active-site residue. Substrate-binding positions include 89 to 93 (DSGGF), Asp-143, Gln-187, and Gly-214. The interval 245-251 (GVGKPED) is RNA binding. Asp-264 functions as the Nucleophile in the catalytic mechanism. Residues 269–273 (TRNAR) form an RNA binding; important for wobble base 34 recognition region. Zn(2+) contacts are provided by Cys-302, Cys-304, Cys-307, and His-333.

It belongs to the queuine tRNA-ribosyltransferase family. Homodimer. Within each dimer, one monomer is responsible for RNA recognition and catalysis, while the other monomer binds to the replacement base PreQ1. The cofactor is Zn(2+).

It carries out the reaction 7-aminomethyl-7-carbaguanine + guanosine(34) in tRNA = 7-aminomethyl-7-carbaguanosine(34) in tRNA + guanine. It participates in tRNA modification; tRNA-queuosine biosynthesis. Its function is as follows. Catalyzes the base-exchange of a guanine (G) residue with the queuine precursor 7-aminomethyl-7-deazaguanine (PreQ1) at position 34 (anticodon wobble position) in tRNAs with GU(N) anticodons (tRNA-Asp, -Asn, -His and -Tyr). Catalysis occurs through a double-displacement mechanism. The nucleophile active site attacks the C1' of nucleotide 34 to detach the guanine base from the RNA, forming a covalent enzyme-RNA intermediate. The proton acceptor active site deprotonates the incoming PreQ1, allowing a nucleophilic attack on the C1' of the ribose to form the product. After dissociation, two additional enzymatic reactions on the tRNA convert PreQ1 to queuine (Q), resulting in the hypermodified nucleoside queuosine (7-(((4,5-cis-dihydroxy-2-cyclopenten-1-yl)amino)methyl)-7-deazaguanosine). This is Queuine tRNA-ribosyltransferase from Shewanella oneidensis (strain ATCC 700550 / JCM 31522 / CIP 106686 / LMG 19005 / NCIMB 14063 / MR-1).